Reading from the N-terminus, the 257-residue chain is K88 minor fimbrial subunit FaeJ (257 aa).

An N-terminal signal peptide occupies residues 1-26; sequence MLNIIHRLKSGMFPALFFLTSASVLA.

It is found in the fimbrium. Functionally, K88 minor fimbrial subunit, plays an essential role in the biogenesis of the K88 fimbriae. Fimbriae (also called pili), are polar filaments radiating from the surface of the bacterium to a length of 0.5-1.5 micrometers and numbering 100-300 per cell. They enable bacteria to colonize the epithelium of specific host organs. The polypeptide is K88 minor fimbrial subunit FaeJ (faeJ) (Escherichia coli).